The following is a 269-amino-acid chain: Achromobactin transport ATP-binding protein CbrD (269 aa).

In terms of domain architecture, ABC transporter spans 4–240; it reads ITSRELTLGY…ALVKTVFNLD (237 aa). Position 36–43 (36–43) interacts with ATP; sequence GSNGCGKS.

The protein belongs to the ABC transporter superfamily.

It localises to the cell inner membrane. Its function is as follows. Part of the binding-protein-dependent transport system CbrABCD for uptake of the siderophore achromobactin. Probably responsible for energy coupling to the transport system. The chain is Achromobactin transport ATP-binding protein CbrD (cbrD) from Dickeya dadantii (strain 3937) (Erwinia chrysanthemi (strain 3937)).